Reading from the N-terminus, the 913-residue chain is Sterol uptake control protein 2 (913 aa).

A DNA-binding region (zn(2)-C6 fungal-type) is located at residues Gly-50–Tyr-80. Disordered regions lie at residues Gly-103 to Leu-173 and Gly-216 to Ser-258. Residue Thr-122 is modified to Phosphothreonine. The span at Ser-150–Asn-164 shows a compositional bias: basic and acidic residues. Low complexity predominate over residues Gln-222–Gln-241. The stretch at Gln-303–Val-346 forms a coiled coil. Disordered stretches follow at residues Leu-347–Ser-385 and Met-453–Ser-489. The span at Leu-374–Ser-385 shows a compositional bias: polar residues. Residues Ala-440 to Ser-472 adopt a coiled-coil conformation. A compositionally biased stretch (basic and acidic residues) spans Gln-454–Asp-468. The segment covering Gly-469 to Ser-487 has biased composition (polar residues). Ser-519 bears the Phosphoserine mark. Polar residues predominate over residues Glu-552–Thr-562. The interval Glu-552–Gln-571 is disordered.

Its subcellular location is the nucleus. Transcription factor that is involved in activation of anaerobic genes such as DAN/TIR cell wall mannoprotein genes and YML083c. Appears to bind to anaerobic response elements (AR1) with the consensus sequence 5'-TCGTTYAG-3' present in the promoter regions of DAN/TIR genes. Involved in sterol uptake and regulation of the sterol biosynthesis. Binds to sterol regulatory elements (SRE) with the consensus sequence 5'-TCGTATA-3' present in ERG2 and ERG3 promoters. May be involved in down-regulation of CWP2 during anaerobic adaptation. The polypeptide is Sterol uptake control protein 2 (UPC2) (Saccharomyces cerevisiae (strain ATCC 204508 / S288c) (Baker's yeast)).